The primary structure comprises 507 residues: Histidine ammonia-lyase (507 aa).

Residues 141–143 (ASG) constitute a cross-link (5-imidazolinone (Ala-Gly)). Position 142 is a 2,3-didehydroalanine (Ser) (serine 142).

This sequence belongs to the PAL/histidase family. Contains an active site 4-methylidene-imidazol-5-one (MIO), which is formed autocatalytically by cyclization and dehydration of residues Ala-Ser-Gly.

Its subcellular location is the cytoplasm. It carries out the reaction L-histidine = trans-urocanate + NH4(+). The protein operates within amino-acid degradation; L-histidine degradation into L-glutamate; N-formimidoyl-L-glutamate from L-histidine: step 1/3. The sequence is that of Histidine ammonia-lyase from Burkholderia ambifaria (strain ATCC BAA-244 / DSM 16087 / CCUG 44356 / LMG 19182 / AMMD) (Burkholderia cepacia (strain AMMD)).